Here is a 410-residue protein sequence, read N- to C-terminus: Tegument protein VP16 homolog (410 aa).

The interval Pro-388–Arg-410 is disordered.

The protein belongs to the herpesviridae tegument protein VP16 protein family. Associates with the VP16-induced complex; binding to host HCFC1 activates VP16 for association with the octamer motif-binding host protein POU2F1, to form a multiprotein-DNA complex responsible for activating transcription of the viral immediate early genes.

It is found in the virion tegument. The protein resides in the host nucleus. In terms of biological role, transcriptional activator of immediate-early (IE) gene products (alpha genes). Acts as a key activator of lytic infection by initiating the lytic program through the assembly of the transcriptional regulatory VP16-induced complex composed of VP16 and two cellular factors, HCFC1 and POU2F1. VP16-induced complex represents a regulatory switch: when it is on, it promotes IE-gene expression and thus lytic infection, and when it is off, it limits IE-gene transcription favoring latent infection. May play a role in the aggregation of tegument proteins around nucleocapsids during virus morphogenesis. The protein is Tegument protein VP16 homolog of Varicella-zoster virus (strain Dumas) (HHV-3).